The following is a 152-amino-acid chain: Large ribosomal subunit protein uL15 (152 aa).

The disordered stretch occupies residues 1–66 (MRSNPMTLRL…GFEGGQTPMQ (66 aa)). Residues 28-38 (RGIGSGLGKTA) are compositionally biased toward gly residues. The segment covering 39-52 (GRGHKGSFARKGGG) has biased composition (basic residues).

It belongs to the universal ribosomal protein uL15 family. In terms of assembly, part of the 50S ribosomal subunit.

Its function is as follows. Binds to the 23S rRNA. This Xanthomonas oryzae pv. oryzae (strain KACC10331 / KXO85) protein is Large ribosomal subunit protein uL15.